An 84-amino-acid chain; its full sequence is Small ribosomal subunit protein bS16 (84 aa).

Belongs to the bacterial ribosomal protein bS16 family.

The polypeptide is Small ribosomal subunit protein bS16 (Deinococcus radiodurans (strain ATCC 13939 / DSM 20539 / JCM 16871 / CCUG 27074 / LMG 4051 / NBRC 15346 / NCIMB 9279 / VKM B-1422 / R1)).